The following is a 57-amino-acid chain: Serine protease inhibitor Kazal-type 1 (57 aa).

A Kazal-like domain is found at leucine 4–cysteine 57. Cystine bridges form between cysteine 10-cysteine 39, cysteine 17-cysteine 36, and cysteine 25-cysteine 57.

It localises to the secreted. In terms of biological role, serine protease inhibitor which exhibits anti-trypsin activity. In the pancreas, protects against trypsin-catalyzed premature activation of zymogens. Functionally, in the male reproductive tract, binds to sperm heads where it modulates sperm capacitance by inhibiting calcium uptake and nitrogen oxide (NO) production. The sequence is that of Serine protease inhibitor Kazal-type 1 (SPINK1) from Canis lupus familiaris (Dog).